Consider the following 248-residue polypeptide: Calpain small subunit 2 (248 aa).

Ca(2+)-binding residues include Ala-89, Asp-92, Glu-94, Asp-117, Asp-132, Asp-134, Thr-136, Lys-138, Glu-143, Asp-162, Asp-164, Ser-166, and Asp-205. EF-hand domains follow at residues 119–152 (FSLD…NNIK), 149–184 (NNIK…AGFQ), 185–213 (LNEQ…ISCL), and 214–248 (VRLD…TMYS).

As to quaternary structure, heterodimer of a large (catalytic) and a small (regulatory) subunit.

The protein resides in the cytoplasm. It localises to the cell membrane. Calcium-regulated non-lysosomal thiol-protease which catalyzes limited proteolysis of substrates involved in cytoskeletal remodeling and signal transduction. This small subunit may act as a tissue-specific chaperone of the large subunit, possibly by helping it fold into its correct conformation for activity. The protein is Calpain small subunit 2 (CAPNS2) of Homo sapiens (Human).